Consider the following 463-residue polypeptide: Competence protein ComFA (463 aa).

Positions 60, 63, 84, and 87 each coordinate Zn(2+). One can recognise a Helicase ATP-binding domain in the interval 133–285 (IEAISKKEEL…LNGQLHSVRI (153 aa)). 146 to 153 (AVCGAGKT) provides a ligand contact to ATP. The short motif at 233-236 (DEVD) is the DEAD box element. In terms of domain architecture, Helicase C-terminal spans 317-463 (AVKRWIEFHV…ELAAKVECTD (147 aa)).

The protein belongs to the DEAD box helicase family. Monomer and dimer in solution. Interacts with DprA and ComFC; ComFA-ComFC form rings about 150 Angstroms in diameter with apparent 6-fold symmetry. Requires Zn(2+) as cofactor.

Its subcellular location is the cytoplasm. Involved in transformation (genetic competence for DNA uptake). Required for DNA uptake but not for DNA binding to cells. DNA uptake is energy dependent, this protein may provide the driving force for DNA uptake. Does not have helicase activity, translocates on single-stranded (ss)DNA in a 5'-3' direction in an ATP-dependent manner, but does not unwind double-stranded (ds)DNA. ATP hydrolysis causes the release of ssDNA from ComFA. A ssDNA-stimulated ATPase; dsDNA does not stimulate ATPase. ATP hydrolysis causes the release of ssDNA from ComFA. Binds ssDNA but only very poorly to dsDNA in the absence of ATP. Binding to ssDNA does not require free DNA ends. The polypeptide is Competence protein ComFA (Bacillus subtilis (strain 168)).